Reading from the N-terminus, the 347-residue chain is N-acetyl-gamma-glutamyl-phosphate reductase (347 aa).

Cys152 is an active-site residue.

Belongs to the NAGSA dehydrogenase family. Type 1 subfamily.

The protein resides in the cytoplasm. It carries out the reaction N-acetyl-L-glutamate 5-semialdehyde + phosphate + NADP(+) = N-acetyl-L-glutamyl 5-phosphate + NADPH + H(+). It functions in the pathway amino-acid biosynthesis; L-arginine biosynthesis; N(2)-acetyl-L-ornithine from L-glutamate: step 3/4. Functionally, catalyzes the NADPH-dependent reduction of N-acetyl-5-glutamyl phosphate to yield N-acetyl-L-glutamate 5-semialdehyde. This Neisseria meningitidis serogroup C (strain 053442) protein is N-acetyl-gamma-glutamyl-phosphate reductase.